Consider the following 421-residue polypeptide: Queuine tRNA-ribosyltransferase accessory subunit 2 (421 aa).

C328, C330, C333, and H359 together coordinate Zn(2+).

It belongs to the queuine tRNA-ribosyltransferase family. QTRT2 subfamily. In terms of assembly, heterodimer of a catalytic subunit and an accessory subunit. The cofactor is Zn(2+).

The protein resides in the cytoplasm. Non-catalytic subunit of the queuine tRNA-ribosyltransferase (TGT) that catalyzes the base-exchange of a guanine (G) residue with queuine (Q) at position 34 (anticodon wobble position) in tRNAs with GU(N) anticodons (tRNA-Asp, -Asn, -His and -Tyr), resulting in the hypermodified nucleoside queuosine (7-(((4,5-cis-dihydroxy-2-cyclopenten-1-yl)amino)methyl)-7-deazaguanosine). In Aedes aegypti (Yellowfever mosquito), this protein is Queuine tRNA-ribosyltransferase accessory subunit 2.